Reading from the N-terminus, the 523-residue chain is Peptide chain release factor 3 (523 aa).

Residues 10 to 277 (KKRRTFAIIS…SFVDLAPAPE (268 aa)) enclose the tr-type G domain. Residues 19-26 (SHPDAGKT), 87-91 (DTPGH), and 141-144 (NKLD) each bind GTP.

This sequence belongs to the TRAFAC class translation factor GTPase superfamily. Classic translation factor GTPase family. PrfC subfamily.

The protein localises to the cytoplasm. Its function is as follows. Increases the formation of ribosomal termination complexes and stimulates activities of RF-1 and RF-2. It binds guanine nucleotides and has strong preference for UGA stop codons. It may interact directly with the ribosome. The stimulation of RF-1 and RF-2 is significantly reduced by GTP and GDP, but not by GMP. This chain is Peptide chain release factor 3, found in Lactobacillus helveticus (strain DPC 4571).